The sequence spans 495 residues: NAD(+)--protein-arginine ADP-ribosyltransferase Tre1 (495 aa).

A disordered region spans residues 278–309 (PDLQIKGPTPVKKPEPLQPARQPEKASAPKPV). The TR mART core domain occupies 315 to 495 (MSLREAVGNQ…VTQFILKEIP (181 aa)). The interval 344–495 (RSALLTDDQI…VTQFILKEIP (152 aa)) is ART domain. Catalysis depends on residues Arg406, Ser431, and Glu466.

This sequence belongs to the Arg-specific ADP-ribosyltransferase family.

The protein resides in the secreted. Its subcellular location is the host cytoplasm. It carries out the reaction L-arginyl-[protein] + NAD(+) = N(omega)-(ADP-D-ribosyl)-L-arginyl-[protein] + nicotinamide + H(+). Its function is as follows. Toxic component of a contact-dependent interbacterial competition system (also called effector-immunity systems). Acts by ADP-ribosylating a number of target proteins in target cells; E.coli target proteins include FtsZ, EFTu, RNase E, Fis, YegQ, GuaB and IF2. The polypeptide is NAD(+)--protein-arginine ADP-ribosyltransferase Tre1 (Pseudomonas putida (strain GB-1)).